The primary structure comprises 624 residues: E3 ubiquitin-protein ligase RLIM (624 aa).

M1 carries the post-translational modification N-acetylmethionine. A compositionally biased stretch (basic and acidic residues) spans 1 to 11; it reads MENSDSNDKGS. Disordered stretches follow at residues 1-25, 72-251, 257-276, 291-363, and 424-522; these read MENS…QMDR, KEGP…SQTF, NETE…QQIS, TRNA…RGGF, and SDSE…TFDE. Polar residues predominate over residues 104–132; that stretch reads SVRQTGNTTRSGQRGNQSWRAVSRTNPNS. Low complexity predominate over residues 142 to 153; it reads NVNRNNGSQNSE. The residue at position 164 (S164) is a Phosphoserine. Over residues 165 to 188 the composition is skewed to polar residues; sequence GENVENNSQRQVENPRSESTSARP. Residues S195, S228, S230, and S276 each carry the phosphoserine modification. The segment covering 214 to 229 has biased composition (basic and acidic residues); that stretch reads RSPDHRRTRARAERSR. The segment covering 291 to 315 has biased composition (polar residues); the sequence is TRNASQGAGSSDTAASGESTGSGQR. The segment covering 329–339 has biased composition (basic and acidic residues); the sequence is RPGEYRQRDSI. A compositionally biased stretch (polar residues) spans 340-356; that stretch reads ASRTRSRSQTPNNTVTY. The span at 445 to 454 shows a compositional bias: gly residues; that stretch reads GRGGSGGGSS. Residues 455-507 show a composition bias toward low complexity; sequence SGSSSSSSSSSSSSSSSSSSSSPSSSSGGESSETSSDLFEGSNEGSSSSGSSG. The segment at 570-611 adopts an RING-type zinc-finger fold; the sequence is CSVCITEYTEGNKLRKLPCSHEYHVHCIDRWLSENSTCPICR. The PDZ-binding motif lies at 621-624; it reads ESVV.

Belongs to the RNF12 family. Interacts with LIM/homeobox factors such as LHX3. Interacts with LDB1, LDB2 and SIN3A. Interacts with LIMK1. Interacts (via N-terminus) with TERF1. Interacts (via C-terminus) with ESR1. Expressed in many tissues.

The protein localises to the nucleus. It carries out the reaction S-ubiquitinyl-[E2 ubiquitin-conjugating enzyme]-L-cysteine + [acceptor protein]-L-lysine = [E2 ubiquitin-conjugating enzyme]-L-cysteine + N(6)-ubiquitinyl-[acceptor protein]-L-lysine.. It participates in protein modification; protein ubiquitination. Its function is as follows. E3 ubiquitin-protein ligase. Acts as a negative coregulator for LIM homeodomain transcription factors by mediating the ubiquitination and subsequent degradation of LIM cofactors LDB1 and LDB2 and by mediating the recruitment the SIN3a/histone deacetylase corepressor complex. Ubiquitination and degradation of LIM cofactors LDB1 and LDB2 allows DNA-bound LIM homeodomain transcription factors to interact with other protein partners such as RLIM. Plays a role in telomere length-mediated growth suppression by mediating the ubiquitination and degradation of TERF1. By targeting ZFP42 for degradation, acts as an activator of random inactivation of X chromosome in the embryo, a stochastic process in which one X chromosome is inactivated to minimize sex-related dosage differences of X-encoded genes in somatic cells of female placental mammals. This chain is E3 ubiquitin-protein ligase RLIM (RLIM), found in Homo sapiens (Human).